The primary structure comprises 61 residues: Small ribosomal subunit protein uS14 (61 aa).

Zn(2+) is bound by residues cysteine 24, cysteine 27, cysteine 40, and cysteine 43.

It belongs to the universal ribosomal protein uS14 family. Zinc-binding uS14 subfamily. As to quaternary structure, part of the 30S ribosomal subunit. Contacts proteins S3 and S10. Zn(2+) serves as cofactor.

Functionally, binds 16S rRNA, required for the assembly of 30S particles and may also be responsible for determining the conformation of the 16S rRNA at the A site. This is Small ribosomal subunit protein uS14 from Rubrobacter xylanophilus (strain DSM 9941 / JCM 11954 / NBRC 16129 / PRD-1).